Reading from the N-terminus, the 300-residue chain is 4-hydroxy-tetrahydrodipicolinate synthase (300 aa).

T46 is a pyruvate binding site. Residue Y134 is the Proton donor/acceptor of the active site. Catalysis depends on K162, which acts as the Schiff-base intermediate with substrate. V204 is a binding site for pyruvate.

Belongs to the DapA family. Homotetramer; dimer of dimers.

The protein localises to the cytoplasm. The enzyme catalyses L-aspartate 4-semialdehyde + pyruvate = (2S,4S)-4-hydroxy-2,3,4,5-tetrahydrodipicolinate + H2O + H(+). The protein operates within amino-acid biosynthesis; L-lysine biosynthesis via DAP pathway; (S)-tetrahydrodipicolinate from L-aspartate: step 3/4. In terms of biological role, catalyzes the condensation of (S)-aspartate-beta-semialdehyde [(S)-ASA] and pyruvate to 4-hydroxy-tetrahydrodipicolinate (HTPA). The chain is 4-hydroxy-tetrahydrodipicolinate synthase from Heliobacterium modesticaldum (strain ATCC 51547 / Ice1).